We begin with the raw amino-acid sequence, 961 residues long: DNA replication licensing factor MCM2 (961 aa).

Positions 1 to 17 (MDDSENNAPSTPGSPGF) are enriched in polar residues. 2 disordered regions span residues 1–81 (MDDS…FNDN) and 120–220 (AEAE…EEDE). Over residues 39 to 78 (SDDDDDDVVGAEEAEVDPNVLPEDDGVVAAEEEEDGEDLF) the composition is skewed to acidic residues. 2 stretches are compositionally biased toward basic and acidic residues: residues 120-146 (AEAE…LHDQ) and 166-176 (PPREPRTPRSD). Residues 205 to 220 (QTDDDPYEDEFDEEDE) show a composition bias toward acidic residues. Residues 380 to 406 (CSKCGTVLGPFFQNSYTEVKVGSCPEC) form a C4-type zinc finger. An MCM domain is found at 524–730 (IGERIVKSIA…FTDEMLARFV (207 aa)). 574–581 (GDPGTAKS) is an ATP binding site. The Arginine finger signature appears at 706–709 (SRFD).

It belongs to the MCM family. In terms of assembly, component of the minichromosome maintenance (MCM) complex, a heterotetramer composed of MCM2, MCM3, MCM4, MCM5, MCM6 and MCM7. Interacts with CSN5. As to expression, widely expressed, with higher expression in developing tissues.

Its subcellular location is the nucleus. It catalyses the reaction ATP + H2O = ADP + phosphate + H(+). Functionally, probable component of the MCM2-7 complex (MCM complex) that may function as a DNA helicase and which is essential to undergo a single round of replication initiation and elongation per cell cycle in eukaryotic cells. Can complement the fission yeast mcm2 mutant. The chain is DNA replication licensing factor MCM2 from Oryza sativa subsp. japonica (Rice).